The sequence spans 179 residues: tRNA (cytidine(56)-2'-O)-methyltransferase (179 aa).

Leu-84 lines the S-adenosyl-L-methionine pocket.

This sequence belongs to the aTrm56 family. Homodimer.

It localises to the cytoplasm. The catalysed reaction is cytidine(56) in tRNA + S-adenosyl-L-methionine = 2'-O-methylcytidine(56) in tRNA + S-adenosyl-L-homocysteine + H(+). In terms of biological role, specifically catalyzes the AdoMet-dependent 2'-O-ribose methylation of cytidine at position 56 in tRNAs. The chain is tRNA (cytidine(56)-2'-O)-methyltransferase from Methanothermobacter thermautotrophicus (strain ATCC 29096 / DSM 1053 / JCM 10044 / NBRC 100330 / Delta H) (Methanobacterium thermoautotrophicum).